We begin with the raw amino-acid sequence, 319 residues long: HPr kinase/phosphorylase (319 aa).

Active-site residues include His141 and Lys162. 156 to 163 (GNSGVGKS) is a binding site for ATP. Ser163 contacts Mg(2+). The active-site Proton acceptor; for phosphorylation activity. Proton donor; for dephosphorylation activity is the Asp180. The tract at residues 204-213 (MEIRGIGIID) is important for the catalytic mechanism of both phosphorylation and dephosphorylation. Glu205 provides a ligand contact to Mg(2+). Residue Arg246 is part of the active site. An important for the catalytic mechanism of dephosphorylation region spans residues 267–272 (PVKVGR).

It belongs to the HPrK/P family. In terms of assembly, homohexamer. Mg(2+) serves as cofactor.

The enzyme catalyses [HPr protein]-L-serine + ATP = [HPr protein]-O-phospho-L-serine + ADP + H(+). It carries out the reaction [HPr protein]-O-phospho-L-serine + phosphate + H(+) = [HPr protein]-L-serine + diphosphate. Catalyzes the ATP- as well as the pyrophosphate-dependent phosphorylation of a specific serine residue in HPr, a phosphocarrier protein of the phosphoenolpyruvate-dependent sugar phosphotransferase system (PTS). HprK/P also catalyzes the pyrophosphate-producing, inorganic phosphate-dependent dephosphorylation (phosphorolysis) of seryl-phosphorylated HPr (P-Ser-HPr). The two antagonistic activities of HprK/P are regulated by several intracellular metabolites, which change their concentration in response to the absence or presence of rapidly metabolisable carbon sources (glucose, fructose, etc.) in the growth medium. Therefore, by controlling the phosphorylation state of HPr, HPrK/P is a sensor enzyme that plays a major role in the regulation of carbon metabolism and sugar transport: it mediates carbon catabolite repression (CCR), and regulates PTS-catalyzed carbohydrate uptake and inducer exclusion. This is HPr kinase/phosphorylase from Lactobacillus gasseri (strain ATCC 33323 / DSM 20243 / BCRC 14619 / CIP 102991 / JCM 1131 / KCTC 3163 / NCIMB 11718 / NCTC 13722 / AM63).